A 225-amino-acid polypeptide reads, in one-letter code: Lipid A 4'-phosphatase (225 aa).

Helical transmembrane passes span 29–49 (SAFT…YILL), 51–71 (NFHW…ITFA), 110–130 (FGFP…LICL), 136–156 (LSIF…YLGL), 160–180 (GDLV…YFIA), and 203–223 (TEVM…YSIV).

Belongs to the lipid A LpxF 4'-phosphatase family.

It localises to the cell inner membrane. The protein operates within bacterial outer membrane biogenesis; LPS lipid A biosynthesis. Its function is as follows. Probably removes the 4'-phosphate group from lipid A. Removal of this phosphate group confers resistance to cationic antimicrobial peptides (CAMPs), inflammation-associated peptides produced by the human host. This LPS modification helps maintain the stability of this commensal bacterium in gut microbiota. The sequence is that of Lipid A 4'-phosphatase from Bacteroides thetaiotaomicron (strain ATCC 29148 / DSM 2079 / JCM 5827 / CCUG 10774 / NCTC 10582 / VPI-5482 / E50).